A 1835-amino-acid polypeptide reads, in one-letter code: AT-rich interactive domain-containing protein 2 (1835 aa).

At Ala-2 the chain carries N-acetylalanine. Ser-4 is subject to Phosphoserine. Glycyl lysine isopeptide (Lys-Gly) (interchain with G-Cter in SUMO2) cross-links involve residues Lys-7, Lys-15, and Lys-119. The ARID domain maps to Arg-13–His-105. The LXXLL motif lies at Leu-313–Leu-317. Positions Ala-524 to Ala-603 form a DNA-binding region, RFX-type winged-helix. A Glycyl lysine isopeptide (Lys-Gly) (interchain with G-Cter in SUMO2) cross-link involves residue Lys-555. Ser-631 and Ser-635 each carry phosphoserine. Phosphothreonine is present on Thr-653. Ser-689 bears the Phosphoserine mark. Residue Thr-692 is modified to Phosphothreonine. Disordered regions lie at residues Gln-819 to Asp-844, Leu-962 to Ser-1057, Met-1266 to Glu-1287, Asn-1295 to Ser-1314, and Leu-1321 to Ser-1341. 3 stretches are compositionally biased toward low complexity: residues Thr-823–Gln-843, Pro-985–Ser-996, and Gln-1025–Gln-1044. The residue at position 1300 (Ser-1300) is a Phosphoserine. A compositionally biased stretch (polar residues) spans Asp-1301–Ser-1314. Phosphoserine occurs at positions 1391 and 1496. 2 disordered regions span residues Asp-1488–Thr-1522 and Ser-1572–Gly-1629. Residues Ser-1491–Thr-1509 are compositionally biased toward polar residues. Residues Lys-1513 to Thr-1522 show a composition bias toward basic and acidic residues. Over residues Ala-1573 to Asn-1592 the composition is skewed to polar residues. The segment covering Gln-1602–Asp-1623 has biased composition (low complexity). The C2H2-type zinc finger occupies Phe-1632–His-1657. Glycyl lysine isopeptide (Lys-Gly) (interchain with G-Cter in SUMO2) cross-links involve residues Lys-1701, Lys-1716, and Lys-1731. Positions Asp-1703–Arg-1728 are disordered. Over residues Ala-1708–Arg-1728 the composition is skewed to polar residues.

Component of the SWI/SNF-B (PBAF) chromatin remodeling complex, at least composed of SMARCA4/BRG1, SMARCB1/BAF47/SNF5, ACTL6A/BAF53A or ACTL6B/BAF53B, SMARCE1/BAF57, SMARCD1/BAF60A, SMARCD2/BAF60B, perhaps SMARCD3/BAF60C, SMARCC1/BAF155, SMARCC2/BAF170, PBRM1/BAF180, ARID2/BAF200 and actin. Interacts with SRF. Forms complexes with SRF and SRF cofactors MYOCD, NKX2-5 and SRFBP1. In terms of tissue distribution, highly expressed in heart.

The protein resides in the nucleus. Its function is as follows. Involved in transcriptional activation and repression of select genes by chromatin remodeling (alteration of DNA-nucleosome topology). Required for the stability of the SWI/SNF chromatin remodeling complex SWI/SNF-B (PBAF). May be involved in targeting the complex to different genes. May be involved in regulating transcriptional activation of cardiac genes. The chain is AT-rich interactive domain-containing protein 2 from Homo sapiens (Human).